A 283-amino-acid polypeptide reads, in one-letter code: Non-selective voltage-gated ion channel VDAC1 (283 aa).

Residue Ala2 is modified to N-acetylalanine. Lys12 contacts ATP. A Glycyl lysine isopeptide (Lys-Gly) (interchain with G-Cter in ubiquitin) cross-link involves residue Lys12. Residue Ser13 is modified to Phosphoserine. Position 19 is a phosphothreonine (Thr19). ATP is bound at residue Lys20. Residue Lys20 is modified to N6-acetyllysine; alternate. Position 20 is an N6-succinyllysine; alternate (Lys20). A Glycyl lysine isopeptide (Lys-Gly) (interchain with G-Cter in ubiquitin); alternate cross-link involves residue Lys20. The next 2 membrane-spanning stretches (beta stranded) occupy residues 26-35 (LIKLDLKTKS) and 39-47 (LEFTSSGSA). Residues Lys53 and Lys61 each participate in a glycyl lysine isopeptide (Lys-Gly) (interchain with G-Cter in ubiquitin) cross-link. A beta stranded membrane pass occupies residues 54–64 (VTGSLETKYRW). Phosphotyrosine is present on Tyr67. 3 beta stranded membrane-spanning segments follow: residues 69–76 (LTFTEKWN), 80–89 (TLGTEITVED), and 95–104 (LKLTFDSSFS). Thr107 carries the phosphothreonine modification. N6-acetyllysine; alternate is present on Lys109. Lys109 is covalently cross-linked (Glycyl lysine isopeptide (Lys-Gly) (interchain with G-Cter in ubiquitin); alternate). A Glycyl lysine isopeptide (Lys-Gly) (interchain with G-Cter in ubiquitin) cross-link involves residue Lys110. A run of 4 beta stranded transmembrane segments spans residues 111–120 (NAKIKTGYKR), 123–130 (VNLGCDVD), 137–145 (SIRGALVLG), and 150–158 (LAGYQMNFE). Lys161 is covalently cross-linked (Glycyl lysine isopeptide (Lys-Gly) (interchain with G-Cter in ubiquitin)). The next 6 membrane-spanning stretches (beta stranded) occupy residues 163–175 (RVTQ…GYKT), 178–185 (FQLHTNVN), 189–198 (EFGGSIYQKV), 202–211 (LETAVNLAWT), 218–227 (RFGIAAKYQI), and 231–238 (ACFSAKVN). Phosphoserine; by NEK1 is present on Ser193. A Phosphoserine modification is found at Ser240. 242–244 (LIG) provides a ligand contact to NAD(+). Residues 242–251 (LIGLGYTQTL) form a beta stranded membrane-spanning segment. Lys252 is subject to N6-acetyllysine. A beta stranded membrane pass occupies residues 254-263 (GIKLTLSALL). 260–264 (SALLD) lines the NAD(+) pocket. Position 266 is an N6-acetyllysine; alternate (Lys266). Residue Lys266 forms a Glycyl lysine isopeptide (Lys-Gly) (interchain with G-Cter in ubiquitin); alternate linkage. The chain crosses the membrane as a beta stranded span at residues 273-282 (HKLGLGLEFQ). Lys274 participates in a covalent cross-link: Glycyl lysine isopeptide (Lys-Gly) (interchain with G-Cter in ubiquitin).

Belongs to the eukaryotic mitochondrial porin family. Homodimer and homotrimer; in response to cyclic AMP or calcium; oligomerization is required for scramblase activity. Component of the mitochondrial permeability transition pore complex (mPTPC), at least composed of SPG7, VDAC1 and PPIF. Interacts with SPG7, NIPSNAP2 and SLC25A30. Interacts with hexokinases including HK1. The HK1-VDAC1 complex interacts with ATF2. Interacts with BCL2L1. Interacts with BAK1. Interacts with RTL10/BOP (via BH3 domain). Interacts with amyloid-beta and APP; induces VDAC1 dephosphorylation. Interacts with TMEM41B. Interacts with BCAP31. Interacts with HSPA9; this interaction couples ITPR1 to VDAC1. Phosphorylation at Ser-193 by NEK1 promotes the closed conformational state preventing excessive mitochondrial membrane permeability and subsequent apoptotic cell death after injury. Phosphorylation by the AKT-GSK3B axis stabilizes the protein probably by preventing ubiquitin-mediated proteasomal degradation. Post-translationally, ubiquitinated. Undergoes monoubiquitination and polyubiquitination by PRKN; monoubiquitination at Lys-274 inhibits apoptosis, whereas polyubiquitination leads to its degradation and promotes mitophagy. Deubiquitinated by USP30.

The protein resides in the mitochondrion outer membrane. It is found in the cell membrane. The protein localises to the membrane raft. The catalysed reaction is chloride(in) = chloride(out). It catalyses the reaction K(+)(in) = K(+)(out). It carries out the reaction ATP(in) = ATP(out). The enzyme catalyses Ca(2+)(in) = Ca(2+)(out). The catalysed reaction is Na(+)(in) = Na(+)(out). It catalyses the reaction Mg(2+)(in) = Mg(2+)(out). It carries out the reaction L-glutamate(out) = L-glutamate(in). The enzyme catalyses dopamine(out) = dopamine(in). The catalysed reaction is acetylcholine(in) = acetylcholine(out). It catalyses the reaction Fe(III)-[cytochrome c](out) = Fe(III)-[cytochrome c](in). It carries out the reaction a 1,2-diacyl-sn-glycero-3-phosphocholine(in) = a 1,2-diacyl-sn-glycero-3-phosphocholine(out). The enzyme catalyses a 1,2-diacyl-sn-glycero-3-phospho-L-serine(in) = a 1,2-diacyl-sn-glycero-3-phospho-L-serine(out). Its activity is regulated as follows. Inhibited by nitric oxide. In terms of biological role, non-selective voltage-gated ion channel that mediates the transport of anions and cations through the mitochondrion outer membrane and plasma membrane. The channel at the outer mitochondrial membrane allows diffusion of small hydrophilic molecules; in the plasma membrane it is involved in cell volume regulation and apoptosis. It adopts an open conformation at low or zero membrane potential and a closed conformation at potentials above 30-40 mV. The open state has a weak anion selectivity whereas the closed state is cation-selective. Binds various signaling molecules, including the sphingolipid ceramide, the phospholipid phosphatidylcholine, and the sterols cholesterol and oxysterol. In depolarized mitochondria, acts downstream of PRKN and PINK1 to promote mitophagy or prevent apoptosis; polyubiquitination by PRKN promotes mitophagy, while monoubiquitination by PRKN decreases mitochondrial calcium influx which ultimately inhibits apoptosis. May participate in the formation of the permeability transition pore complex (PTPC) responsible for the release of mitochondrial products that triggers apoptosis. May mediate ATP export from cells. Part of a complex composed of HSPA9, ITPR1 and VDAC1 that regulates mitochondrial calcium-dependent apoptosis by facilitating calcium transport from the ER lumen to the mitochondria intermembrane space thus providing calcium for the downstream calcium channel MCU that directly releases it into mitochondria matrix. Mediates cytochrome c efflux. Functionally, catalyzes the scrambling of phospholipids across the outer mitochondrial membrane; the mechanism is unrelated to channel activity and is capable of translocating both anionic and zwitterionic phospholipids. The chain is Non-selective voltage-gated ion channel VDAC1 from Sus scrofa (Pig).